Consider the following 392-residue polypeptide: uncharacterized protein (392 aa).

This sequence belongs to the chlamydial CPn_0675/CT_696/TC_0068 family.

This is an uncharacterized protein from Chlamydia trachomatis serovar D (strain ATCC VR-885 / DSM 19411 / UW-3/Cx).